An 87-amino-acid chain; its full sequence is Cytochrome c5 (87 aa).

4 residues coordinate heme: Cys19, Cys22, His23, and Met63. An intrachain disulfide couples Cys69 to Cys72.

This sequence belongs to the cytochrome c family. As to quaternary structure, homodimer. Binds 1 heme group per subunit.

Functionally, it is unreactive with cytochrome c reductase or oxidase but seems to function as an intermediate in nitrate respiration of facultative anaerobic pseudmonads. The chain is Cytochrome c5 from Ectopseudomonas mendocina (Pseudomonas mendocina).